Consider the following 228-residue polypeptide: Response regulator MprA (228 aa).

The Response regulatory domain maps to 2–116 (RILAVDDDRA…ELLARIRALL (115 aa)). The residue at position 46 (Asp-46) is a 4-aspartylphosphate. Residues 127-225 (SVAMSFSDLT…VRGVGYVLRE (99 aa)) constitute a DNA-binding region (ompR/PhoB-type).

In terms of processing, phosphorylated and dephosphorylated by MprB.

The protein resides in the cytoplasm. In terms of biological role, member of the two-component regulatory system MprB/MprA which contributes to maintaining a balance among several systems involved in stress resistance and is required for establishment and maintenance of persistent infection in the host. Functions as a transcriptional regulator that recognizes a 19-bp nucleotide motif comprizing two loosely conserved 8-bp direct DNA-binding motif repeats separated by a 3-bp spacer region. The protein is Response regulator MprA (mprA) of Mycobacterium leprae (strain TN).